We begin with the raw amino-acid sequence, 189 residues long: Elongation factor P (189 aa).

Belongs to the elongation factor P family.

The protein resides in the cytoplasm. The protein operates within protein biosynthesis; polypeptide chain elongation. In terms of biological role, involved in peptide bond synthesis. Stimulates efficient translation and peptide-bond synthesis on native or reconstituted 70S ribosomes in vitro. Probably functions indirectly by altering the affinity of the ribosome for aminoacyl-tRNA, thus increasing their reactivity as acceptors for peptidyl transferase. The polypeptide is Elongation factor P (Ehrlichia canis (strain Jake)).